Here is a 120-residue protein sequence, read N- to C-terminus: Large ribosomal subunit protein uL18 (120 aa).

It belongs to the universal ribosomal protein uL18 family. Part of the 50S ribosomal subunit; part of the 5S rRNA/L5/L18/L25 subcomplex. Contacts the 5S and 23S rRNAs.

This is one of the proteins that bind and probably mediate the attachment of the 5S RNA into the large ribosomal subunit, where it forms part of the central protuberance. The protein is Large ribosomal subunit protein uL18 of Hyphomonas neptunium (strain ATCC 15444).